The primary structure comprises 316 residues: MNQLECLKKYTDIVVDSGDLVSINKFKLGDVTTNPSLIRQVMSLQKYQYIIYDSIRYAKKKGGSHKFKLENAIDKVSVILGSEILKNISGKISTEIDSRLSFNTNLCIERAKKLISMYEEHDIHRDRVLIKLAATWESVSAAKELKKENIQSNLTLLFSFAQAKICAEAGVFLISPFVGRIYDWYKSKSLIKSAMIDDDPGVNAVRKIYQYYKEYGYHTIIMGASFRNVDQVLALSGCDRLTISPNLLHKLQLSDDLVIRKLIPPKHKKLQPVCMSKSEFCWFHNEDAMAVEKLSEGIRQFGKDQQELENIINNNF.

The active-site Schiff-base intermediate with substrate is the Lys131.

This sequence belongs to the transaldolase family. Type 1 subfamily. Homodimer.

Its subcellular location is the cytoplasm. The enzyme catalyses D-sedoheptulose 7-phosphate + D-glyceraldehyde 3-phosphate = D-erythrose 4-phosphate + beta-D-fructose 6-phosphate. Its pathway is carbohydrate degradation; pentose phosphate pathway; D-glyceraldehyde 3-phosphate and beta-D-fructose 6-phosphate from D-ribose 5-phosphate and D-xylulose 5-phosphate (non-oxidative stage): step 2/3. Its function is as follows. Transaldolase is important for the balance of metabolites in the pentose-phosphate pathway. The sequence is that of Transaldolase from Buchnera aphidicola subsp. Baizongia pistaciae (strain Bp).